Consider the following 382-residue polypeptide: uncharacterized protein (382 aa).

12 helical membrane-spanning segments follow: residues 8–28 (VMLL…LNTL), 45–65 (MVSS…GYLI), 75–95 (YLAS…VGFW), 102–122 (FIAG…LMCS), 131–151 (LLAA…LLVS), 157–177 (LLHV…PLLF), 204–224 (LGVN…GLMP), 231–251 (GMAN…GILG), 270–290 (VQVF…AMAP), 291–311 (ALFI…AWAC), 325–345 (ALLL…AMLM), and 349–369 (SDNL…LMLL).

Belongs to the major facilitator superfamily. YcaD (TC 2.A.1.26) family.

It is found in the cell inner membrane. This is an uncharacterized protein from Salmonella dublin (strain CT_02021853).